A 61-amino-acid polypeptide reads, in one-letter code: Small ribosomal subunit protein uS14 (61 aa).

Zn(2+) is bound by residues cysteine 24, cysteine 27, cysteine 40, and cysteine 43.

Belongs to the universal ribosomal protein uS14 family. Zinc-binding uS14 subfamily. As to quaternary structure, part of the 30S ribosomal subunit. Contacts proteins S3 and S10. Zn(2+) is required as a cofactor.

Its function is as follows. Binds 16S rRNA, required for the assembly of 30S particles and may also be responsible for determining the conformation of the 16S rRNA at the A site. In Pseudothermotoga lettingae (strain ATCC BAA-301 / DSM 14385 / NBRC 107922 / TMO) (Thermotoga lettingae), this protein is Small ribosomal subunit protein uS14.